We begin with the raw amino-acid sequence, 137 residues long: Type 3 secretion system pilotin (137 aa).

A signal peptide spans 1-14 (MLLPLALLLGGCVS).

It belongs to the ExsB/YscW family.

It is found in the cell outer membrane. Involved in the synthesis of the type III secretion system (T3SS), also called injectisome, which is used to inject bacterial effector proteins into eukaryotic host cells. Pilot protein that is required for the proper localization of the secretin PscC in the outer membrane. Necessary for full in vivo virulence. This is Type 3 secretion system pilotin from Pseudomonas aeruginosa (strain ATCC 15692 / DSM 22644 / CIP 104116 / JCM 14847 / LMG 12228 / 1C / PRS 101 / PAO1).